We begin with the raw amino-acid sequence, 579 residues long: L-arabinonate dehydratase (579 aa).

Cys59 contributes to the [2Fe-2S] cluster binding site. Residue Glu91 coordinates Mg(2+). Cys127 lines the [2Fe-2S] cluster pocket. A Mg(2+)-binding site is contributed by Asp128. Cys200 is a [2Fe-2S] cluster binding site. Glu453 is a Mg(2+) binding site.

It belongs to the IlvD/Edd family. As to quaternary structure, homotetramer. The cofactor is [2Fe-2S] cluster. Requires Mg(2+) as cofactor.

The catalysed reaction is L-arabinonate = 2-dehydro-3-deoxy-L-arabinonate + H2O. It catalyses the reaction D-galactonate = 2-dehydro-3-deoxy-D-galactonate + H2O. It carries out the reaction D-fuconate = 2-dehydro-3-deoxy-D-fuconate + H2O. The protein operates within carbohydrate metabolism. Catalyzes the dehydration of L-arabinonate to 2-dehydro-3-deoxy-L-arabinonate during L-arabinose degradation. Can also dehydrate D-galactonate and D-fuconate with good catalytic efficiency. Has weak activity with D-xylonate and D-gluconate. The chain is L-arabinonate dehydratase from Rhizobium leguminosarum bv. trifolii (strain WSM2304).